The sequence spans 59 residues: UPF0434 protein VV1_2087 (59 aa).

It belongs to the UPF0434 family.

This chain is UPF0434 protein VV1_2087, found in Vibrio vulnificus (strain CMCP6).